The following is a 443-amino-acid chain: EP1-like glycoprotein 4 (443 aa).

The N-terminal stretch at 1 to 22 (MEFSTTLALFFTLSIFLVGAQA) is a signal peptide. The region spanning 29–159 (QFRVVNEGGY…NGKFVWQSFD (131 aa)) is the Bulb-type lectin domain. N-linked (GlcNAc...) asparagine glycosylation is found at N66, N102, N258, and N269. One copy of the WD repeat lies at 254–296 (GSQFNVSTFLSRPKHNATLSFLRLESDGNIRVWSYSTLATSTA). Positions 356–433 (CDPKTFHYFK…TSLVAYVKAP (78 aa)) constitute a PAN domain. Disulfide bonds link C387–C409 and C391–C397. N-linked (GlcNAc...) asparagine glycosylation occurs at N434.

It is found in the secreted. The protein localises to the cell wall. The polypeptide is EP1-like glycoprotein 4 (Arabidopsis thaliana (Mouse-ear cress)).